We begin with the raw amino-acid sequence, 291 residues long: Acetyl-coenzyme A carboxylase carboxyl transferase subunit beta (291 aa).

Residues 29-291 enclose the CoA carboxyltransferase N-terminal domain; the sequence is IMTKCPQCKK…TGGEREWLEN (263 aa). Positions 33, 36, 52, and 55 each coordinate Zn(2+). Residues 33 to 55 form a C4-type zinc finger; that stretch reads CPQCKKIMLTKELDKNLRVCMNC.

The protein belongs to the AccD/PCCB family. As to quaternary structure, acetyl-CoA carboxylase is a heterohexamer composed of biotin carboxyl carrier protein (AccB), biotin carboxylase (AccC) and two subunits each of ACCase subunit alpha (AccA) and ACCase subunit beta (AccD). Requires Zn(2+) as cofactor.

The protein resides in the cytoplasm. The enzyme catalyses N(6)-carboxybiotinyl-L-lysyl-[protein] + acetyl-CoA = N(6)-biotinyl-L-lysyl-[protein] + malonyl-CoA. It participates in lipid metabolism; malonyl-CoA biosynthesis; malonyl-CoA from acetyl-CoA: step 1/1. Functionally, component of the acetyl coenzyme A carboxylase (ACC) complex. Biotin carboxylase (BC) catalyzes the carboxylation of biotin on its carrier protein (BCCP) and then the CO(2) group is transferred by the transcarboxylase to acetyl-CoA to form malonyl-CoA. In Bacillus pumilus (strain SAFR-032), this protein is Acetyl-coenzyme A carboxylase carboxyl transferase subunit beta.